A 366-amino-acid chain; its full sequence is tRNA N6-adenosine threonylcarbamoyltransferase (366 aa).

A divalent metal cation contacts are provided by histidine 130, histidine 134, and tyrosine 151. Substrate-binding positions include tyrosine 151–glycine 155, aspartate 183, glycine 198, glutamate 202, and asparagine 297. Aspartate 325 is a binding site for a divalent metal cation.

The protein belongs to the KAE1 / TsaD family. As to quaternary structure, component of the EKC/KEOPS complex composed of at least BUD32, CGI121, GON7, KAE1 and PCC1; the whole complex dimerizes. The cofactor is a divalent metal cation.

Its subcellular location is the cytoplasm. It is found in the nucleus. It carries out the reaction L-threonylcarbamoyladenylate + adenosine(37) in tRNA = N(6)-L-threonylcarbamoyladenosine(37) in tRNA + AMP + H(+). Component of the EKC/KEOPS complex that is required for the formation of a threonylcarbamoyl group on adenosine at position 37 (t(6)A37) in tRNAs that read codons beginning with adenine. The complex is probably involved in the transfer of the threonylcarbamoyl moiety of threonylcarbamoyl-AMP (TC-AMP) to the N6 group of A37. KAE1 likely plays a direct catalytic role in this reaction, but requires other protein(s) of the complex to fulfill this activity. The EKC/KEOPS complex also promotes both telomere uncapping and telomere elongation. The complex is required for efficient recruitment of transcriptional coactivators. The polypeptide is tRNA N6-adenosine threonylcarbamoyltransferase (Cryptococcus neoformans var. neoformans serotype D (strain JEC21 / ATCC MYA-565) (Filobasidiella neoformans)).